A 472-amino-acid polypeptide reads, in one-letter code: Argininosuccinate lyase (472 aa).

The protein belongs to the lyase 1 family. Argininosuccinate lyase subfamily.

Its subcellular location is the cytoplasm. The enzyme catalyses 2-(N(omega)-L-arginino)succinate = fumarate + L-arginine. Its pathway is amino-acid biosynthesis; L-arginine biosynthesis; L-arginine from L-ornithine and carbamoyl phosphate: step 3/3. This Polynucleobacter necessarius subsp. necessarius (strain STIR1) protein is Argininosuccinate lyase.